The following is a 557-amino-acid chain: 2-isopropylmalate synthase (557 aa).

The Pyruvate carboxyltransferase domain occupies 33-307 (PIWCSSDLRD…DPQLDFSDID (275 aa)). Mg(2+)-binding residues include Asp42, His246, His248, and Asn282. Positions 439–557 (ANSPYALVSH…SLSQQEAKAA (119 aa)) are regulatory domain.

Belongs to the alpha-IPM synthase/homocitrate synthase family. LeuA type 2 subfamily. Homodimer. Mg(2+) is required as a cofactor.

It is found in the cytoplasm. It catalyses the reaction 3-methyl-2-oxobutanoate + acetyl-CoA + H2O = (2S)-2-isopropylmalate + CoA + H(+). It functions in the pathway amino-acid biosynthesis; L-leucine biosynthesis; L-leucine from 3-methyl-2-oxobutanoate: step 1/4. Functionally, catalyzes the condensation of the acetyl group of acetyl-CoA with 3-methyl-2-oxobutanoate (2-ketoisovalerate) to form 3-carboxy-3-hydroxy-4-methylpentanoate (2-isopropylmalate). The protein is 2-isopropylmalate synthase of Pseudomonas putida (strain W619).